A 394-amino-acid chain; its full sequence is Dimethyladenosine transferase 2, mitochondrial (394 aa).

A mitochondrion-targeting transit peptide spans 1 to 19 (MWVPGAGIPSRLTLSAFTR). V75, E123, and D149 together coordinate S-adenosyl-L-methionine. The DNA-binding stretch occupies residues 326–327 (KR).

It belongs to the class I-like SAM-binding methyltransferase superfamily. rRNA adenine N(6)-methyltransferase family. KsgA subfamily. Homodimer. Component of the mitochondrial transcription initiation complex, composed at least of TFB2M, TFAM and POLRMT. In this complex TFAM recruits POLRMT to the promoter whereas TFB2M induces structural changes in POLRMT to enable promoter opening and trapping of the DNA non-template strand. Interacts with mitochondrial RNA polymerase POLRMT. Interacts with TFAM.

The protein resides in the mitochondrion. The enzyme catalyses adenosine in rRNA + S-adenosyl-L-methionine = N(6)-methyladenosine in rRNA + S-adenosyl-L-homocysteine + H(+). Functionally, S-adenosyl-L-methionine-dependent rRNA methyltransferase which may methylate two specific adjacent adenosines in the loop of a conserved hairpin near the 3'-end of 12S mitochondrial rRNA. Component of the mitochondrial transcription initiation complex, composed at least of TFB2M, TFAM and POLRMT that is required for basal transcription of mitochondrial DNA. In this complex TFAM recruits POLRMT to a specific promoter whereas TFB2M induces structural changes in POLRMT to enable promoter opening and trapping of the DNA non-template strand. Stimulates transcription independently of the methyltransferase activity. The polypeptide is Dimethyladenosine transferase 2, mitochondrial (Bos taurus (Bovine)).